A 92-amino-acid polypeptide reads, in one-letter code: Small ribosomal subunit protein uS19 (92 aa).

This sequence belongs to the universal ribosomal protein uS19 family.

Its function is as follows. Protein S19 forms a complex with S13 that binds strongly to the 16S ribosomal RNA. This chain is Small ribosomal subunit protein uS19, found in Geobacillus kaustophilus (strain HTA426).